Consider the following 185-residue polypeptide: Flavodoxin (185 aa).

One can recognise a Flavodoxin-like domain in the interval 4-159; that stretch reads VLVIYDTRTG…ACRRLGRRLA (156 aa).

It belongs to the flavodoxin family. The cofactor is FMN.

In terms of biological role, low-potential electron donor to a number of redox enzymes. The protein is Flavodoxin (fldA) of Aquifex aeolicus (strain VF5).